The sequence spans 98 residues: Small ribosomal subunit protein eS24 (98 aa).

This sequence belongs to the eukaryotic ribosomal protein eS24 family. Part of the 30S ribosomal subunit.

The sequence is that of Small ribosomal subunit protein eS24 from Thermococcus kodakarensis (strain ATCC BAA-918 / JCM 12380 / KOD1) (Pyrococcus kodakaraensis (strain KOD1)).